The following is a 138-amino-acid chain: MSALAYPRVNRLAEEIKKIISHMIRNDLRDPRIAKMTSIIEVNVTRDLRFATIYISVLGDQQEKEETIEGLKKSSGFIRKEVGRQITARFTPELIFKLDESIERGVYMYDVISKVTQKDMDEKKNSDEKRDSDEKLED.

The disordered stretch occupies residues 119–138; it reads DMDEKKNSDEKRDSDEKLED.

The protein belongs to the RbfA family. As to quaternary structure, monomer. Binds 30S ribosomal subunits, but not 50S ribosomal subunits or 70S ribosomes.

It is found in the cytoplasm. Functionally, one of several proteins that assist in the late maturation steps of the functional core of the 30S ribosomal subunit. Associates with free 30S ribosomal subunits (but not with 30S subunits that are part of 70S ribosomes or polysomes). Required for efficient processing of 16S rRNA. May interact with the 5'-terminal helix region of 16S rRNA. This chain is Ribosome-binding factor A, found in Alkaliphilus metalliredigens (strain QYMF).